The following is a 168-amino-acid chain: 3'-5' exoribonuclease MT2234.1 (168 aa).

Asp6 is a Mg(2+) binding site. An RNA binding region spans residues 6 to 9; that stretch reads DTEF.

Homodimer. Requires Mg(2+) as cofactor.

In terms of biological role, exonuclease that cleaves single-stranded 3' overhangs of double-stranded RNA. This is 3'-5' exoribonuclease MT2234.1 from Mycobacterium tuberculosis (strain CDC 1551 / Oshkosh).